A 244-amino-acid polypeptide reads, in one-letter code: Probable transcriptional regulatory protein BT0025 (244 aa).

The protein belongs to the TACO1 family.

The protein localises to the cytoplasm. In Borrelia turicatae (strain 91E135), this protein is Probable transcriptional regulatory protein BT0025.